A 443-amino-acid chain; its full sequence is EGF-containing fibulin-like extracellular matrix protein 2 (443 aa).

The first 27 residues, 1–27, serve as a signal peptide directing secretion; the sequence is MLPFASCLPGSLLLWAFLLLLLGAASP. Position 28 is a pyrrolidone carboxylic acid (Q28). The EGF-like 1; atypical domain occupies 36 to 81; sequence YTECTDGYEWDADSQHCRDVNECLTIPEACKGEMKCINHYGGYLCL. 18 disulfides stabilise this stretch: C58–C121, C65–C80, C71–C109, C127–C140, C134–C149, C151–C162, C168–C177, C173–C186, C188–C201, C207–C217, C213–C226, C228–C241, C247–C258, C254–C267, C269–C281, C287–C300, C294–C309, and C315–C327. A disordered region spans residues 91–117; sequence LHGEGPPPPAAHAQQPNPCPQGYEPDE. Residues 123 to 163 enclose the EGF-like 2; calcium-binding domain; that stretch reads DVDECTQALHDCRPSQDCHNLPGSYQCTCPDGYRKIGPECV. The region spanning 164–202 is the EGF-like 3; calcium-binding domain; the sequence is DIDECRYRYCQHRCVNLPGSFRCQCEPGFQLGPNNRSCV. N-linked (GlcNAc...) asparagine glycosylation is present at N198. One can recognise an EGF-like 4; calcium-binding domain in the interval 203-242; that stretch reads DVNECDMGAPCEQRCFNSYGTFLCRCNQGYELHRDGFSCS. An EGF-like 5; calcium-binding domain is found at 243 to 282; it reads DIDECGYSSYLCQYRCVNEPGRFSCHCPQGYQLLATRLCQ. In terms of domain architecture, EGF-like 6; calcium-binding spans 283-328; it reads DIDECETGAHQCSEAQTCVNFHGGYRCVDTNRCVEPYVQVSDNRCL. N394 carries an N-linked (GlcNAc...) asparagine glycan.

It belongs to the fibulin family. Homodimer; disulfide-linked. Multimer; allows heparin binding. Monomer. Binds preferentially to p53 mutants. Interacts with FBN1 (via N-terminal domain); this interaction inhibits EFEMP2 binding to LOX and ELN. Interacts with ELN with moderate affinity; this interaction regulates ELN self-assembly maturation stage. Interacts with PCOLCE. Interacts with collagen type IV trimer (COL4A1-COL4A1-COL4A2), NID2 and moderately with COL15A1-derived endostatin. Interacts with EMILIN1; this interaction promotes the incorporation of EFEMP2 into the extracellular matrix. Interacts with LTBP4; the LTBP4 long form (LTBP4L) has a stronger binding affinity than the LTBP4 short form and the LTBP4 long form promotes fibrillar deposition of EFEMP2. Interacts with LOX (via propeptide); this interaction is strong and facilitates formation of ternary complexes with ELN during elastic fiber assembly; this interaction limits interaction of EFEMP2 with FBLN5. Interacts with PITX2. Interacts with FBLN5 with moderate affinity. Interacts with LOXL1 (via propeptide), LTBP1 and TGFB1 stronger than with LOXL2 and LTBP3. N-glycosylated; contains mostly complex-type glycans. Not O-glycosylated. Post-translationally, cleaved by ELANE; produces a 50-55 kDa fragment. Cleaved by MMP2 and MMP9; produces several fragments. In terms of tissue distribution, expressed in elastic fibers of the skin, near the dermal-epidermal junction, surrounding the hair follicles and throughout the dermis. Expressed in tendon around tenocytes. Prominently expressed in cartilage, bone, perichondrium and ligaments. Also detected in bone marrow stroma. Expressed in aorta, lung, and esophagus.

It localises to the secreted. The protein localises to the extracellular space. Its subcellular location is the extracellular matrix. It is found in the basement membrane. Its function is as follows. Plays a crucial role in elastic fiber formation in tissue, and in the formation of ultrastructural connections between elastic laminae and smooth muscle cells in the aorta, therefore participates in terminal differentiation and maturation of smooth muscle cell (SMC) and in the mechanical properties and wall integrity maintenance of the aorta. In addition, is involved in the control of collagen fibril assembly in tissue throught proteolytic activation of LOX leading to cross- linking of collagen and elastin. Also promotes ELN coacervation and participates in the deposition of ELN coacervates on to microfibrils but also regulates ELN cross- linking through LOX interaction. Moreover adheres to the cells through heparin binding in a calcium-dependent manner and regulates vascularlar smooth muscle cells proliferation through angiotensin signaling. The sequence is that of EGF-containing fibulin-like extracellular matrix protein 2 from Mus musculus (Mouse).